A 128-amino-acid chain; its full sequence is Iron-sulfur cluster insertion protein ErpA (128 aa).

Iron-sulfur cluster contacts are provided by Cys56, Cys120, and Cys122.

It belongs to the HesB/IscA family. Homodimer. Requires iron-sulfur cluster as cofactor.

Required for insertion of 4Fe-4S clusters for at least IspG. This Xylella fastidiosa (strain M23) protein is Iron-sulfur cluster insertion protein ErpA.